A 533-amino-acid polypeptide reads, in one-letter code: NAD(P)H-quinone oxidoreductase chain 4 2 (533 aa).

Helical transmembrane passes span 5 to 25 (FPWLTVLTLLPLVAAFFIPVL), 33 to 53 (VRWYALAIALLEFGLSAMVFW), 86 to 106 (LAVPLILLTGLVNTLAIFAAW), 114 to 134 (LFYFLMLALYSAQIGVFAAQD), 135 to 155 (LILFFLIWELELVPVYLLISI), 168 to 188 (FILYTAVGSLFILIAGLGMAF), 208 to 228 (ALELLAYAGFLIAFGVKLPIF), 242 to 262 (SAPVSMVLAGVLLKMGGYGLI), 276 to 296 (FAPVLIALGVVNIIYGALTAF), 310 to 330 (ISHMGFVLLGIGALNGIGLNG), 331 to 351 (AMLQMLSHGLIAAVLFFLAGV), 384 to 404 (ASLALPGMSGFVSELTVFLGL), 416 to 436 (VGVIFLAAVGVIITPVYLLSM), and 462 to 482 (TFIALSLLVPIIAVGMYPKVA).

This sequence belongs to the complex I subunit 4 family.

The protein resides in the cellular thylakoid membrane. It carries out the reaction a plastoquinone + NADH + (n+1) H(+)(in) = a plastoquinol + NAD(+) + n H(+)(out). The catalysed reaction is a plastoquinone + NADPH + (n+1) H(+)(in) = a plastoquinol + NADP(+) + n H(+)(out). Functionally, NDH-1 shuttles electrons from NAD(P)H, via FMN and iron-sulfur (Fe-S) centers, to quinones in the respiratory chain. The immediate electron acceptor for the enzyme in this species is believed to be plastoquinone. Couples the redox reaction to proton translocation (for every two electrons transferred, four hydrogen ions are translocated across the cytoplasmic membrane), and thus conserves the redox energy in a proton gradient. This Thermosynechococcus vestitus (strain NIES-2133 / IAM M-273 / BP-1) protein is NAD(P)H-quinone oxidoreductase chain 4 2.